We begin with the raw amino-acid sequence, 209 residues long: Cytochrome bo(3) ubiquinol oxidase subunit 3 (209 aa).

The Cytoplasmic portion of the chain corresponds to 1–29; that stretch reads MSTAVLNKHLADAHEVGHDHDHAHDSGGN. Residues 30-50 form a helical membrane-spanning segment; it reads TVFGFWLYLMTDCVLFASVFA. The Periplasmic segment spans residues 51 to 72; sequence TYAVLVHHTAGGPSGKDIFELP. The chain crosses the membrane as a helical span at residues 73 to 93; it reads YVLVETAILLVSSCTYGLAML. The Cytoplasmic segment spans residues 94–102; the sequence is SAHKGAKGQ. The helical transmembrane segment at 103–123 threads the bilayer; that stretch reads AIAWLGVTFLLGAAFIGMEIN. The Periplasmic segment spans residues 124–143; it reads EFHHLIAEGFGPSRSAFLSS. A helical membrane pass occupies residues 144–164; that stretch reads FFTLVGMHGLHVSAGLLWMLV. The Cytoplasmic portion of the chain corresponds to 165–186; that stretch reads LMAQIWTRGLTAQNNTRMMCLS. Residues 187-207 traverse the membrane as a helical segment; sequence LFWHFLDIVWICVFTVVYLMG. Residues 208 to 209 lie on the Periplasmic side of the membrane; the sequence is AL.

The protein belongs to the cytochrome c oxidase subunit 3 family. In terms of assembly, heterooctamer of two A chains, two B chains, two C chains and two D chains.

Its subcellular location is the cell inner membrane. Cytochrome bo(3) ubiquinol terminal oxidase is the component of the aerobic respiratory chain of E.coli that predominates when cells are grown at high aeration. Has proton pump activity across the membrane in addition to electron transfer, pumping 2 protons/electron. In Pseudomonas aeruginosa (strain ATCC 15692 / DSM 22644 / CIP 104116 / JCM 14847 / LMG 12228 / 1C / PRS 101 / PAO1), this protein is Cytochrome bo(3) ubiquinol oxidase subunit 3 (cyoC).